We begin with the raw amino-acid sequence, 148 residues long: Ubiquitin conjugating enzyme E2 B (148 aa).

The UBC core domain maps to 2-148 (AAHKRLQKEI…AKEWTKKYAK (147 aa)). C87 acts as the Glycyl thioester intermediate in catalysis.

This sequence belongs to the ubiquitin-conjugating enzyme family. As to quaternary structure, interacts with mkkA (via F-box/WD40 repeat domains).

The catalysed reaction is S-ubiquitinyl-[E1 ubiquitin-activating enzyme]-L-cysteine + [E2 ubiquitin-conjugating enzyme]-L-cysteine = [E1 ubiquitin-activating enzyme]-L-cysteine + S-ubiquitinyl-[E2 ubiquitin-conjugating enzyme]-L-cysteine.. It functions in the pathway protein modification; protein ubiquitination. Involved in protein ubiquitination and degradation during development. Mediates protein ubiquitination at the mound and finger stage required for subsequent development and may be an essential component of the developmental transition between the induction of postaggregative gene expression and subsequent cell-type differentiation and morphogenesis. ubcB and ubpB differentially control ubiquitination/deubiquitination and degradation of mkkA protein in a cell-type-specific and temporally regulated manner. This Dictyostelium discoideum (Social amoeba) protein is Ubiquitin conjugating enzyme E2 B (ubcB).